Consider the following 525-residue polypeptide: Histidine-rich glycoprotein (525 aa).

The signal sequence occupies residues 1–18 (MKALIAALLLITLQYSCA). Cystatin domains are found at residues 19–136 (VSPT…SALA) and 137–254 (NTKD…NING). 5 disulfide bridges follow: Cys-24-Cys-504, Cys-78-Cys-89, Cys-105-Cys-126, Cys-203-Cys-417, and Cys-218-Cys-241. The interaction with ATP5F1A stretch occupies residues 41–84 (RRRDGYLFQLLRIADAHLDRVENTTVYYLVLDVQESDCSVLSRK). An N-linked (GlcNAc...) asparagine glycan is attached at Asn-63. An N-linked (GlcNAc...) asparagine glycan is attached at Asn-125. Residues 252–407 (INGVPPHLGH…GHHPHGHHPH (156 aa)) are disordered. The segment covering 284–293 (RDHHHPHKPH) has biased composition (basic residues). Over residues 310 to 320 (PPLPQGPPPLL) the composition is skewed to pro residues. The span at 323–348 (SCSSCQHATFGTNGAQRHSHNNNSSD) shows a compositional bias: polar residues. Residues Asn-344 and Asn-345 are each glycosylated (N-linked (GlcNAc...) asparagine). A necessary for endothelial cell focal adhesions and anti-angiogenic activities region spans residues 348 to 382 (DLHPHKHHSHEQHPHGHHPHAHHPHEHDTHRQHPH). Composition is skewed to basic residues over residues 351 to 371 (PHKH…AHHP) and 379 to 407 (QHPH…HHPH).

Interacts (via the HRR domain) with TPM1; the interaction appears to contribute to the antiangiogenic properties of the HRR domain. Interacts with THBS2; the interaction blocks the antiangiogenic effect of THBS2 with CD36. Interacts with THBS1 (via the TSP type I repeats); the interaction blocks the antiangiogenic effect of THBS1 with CD3. Interacts with PLG (via its Kringle domains); the interaction tethers PLG to the cell surface and enhances its activation. Interacts with HPSE; the interaction is enhanced at acidic pH, partially inhibits binding of HPSE to cell surface receptors and modulates its enzymatic activity. Interacts (via the HRR domain) with TMP1; the interaction partially mediates the antiangiogenic properties of HRG. Interacts with kappa and lambda light chains of IgG molecules. Interacts with ATP5F1A; the interaction occurs on the surface of T-cells and alters their cell morphology in concert with CONA. Binds IgG molecules containing kappa and lambda light chains and inhibits the formation of insoluble immunoglobulin complexes. Interacts with F12; the interaction, which is enhanced in the presence of zinc ions and inhibited by heparin-binding to HRG, inhibits factor XII autoactivation and contact-initiated coagulation. It depends on Zn(2+) as a cofactor. Post-translationally, proteolytic cleavage produces several HRG fragments which are mostly disulfide-linked and, therefore, not released. Cleavage by plasmin is inhibited in the presence of heparin, zinc ions or in an acidic environment. Cleavage reduces binding of HRG to heparan sulfate, but enhances the ability of HRG to bind and tether plasminogen to the cell surface. On platelet activation, releases a 33 kDa antiangiogenic peptide which encompasses the HRR. Also cleaved in the C-terminal by plasmin. In terms of processing, N-glycosylated. In terms of tissue distribution, expressed in macrophages and in malignant cells. Expressed by the liver and secreted in plasma (at protein level).

It is found in the secreted. In terms of biological role, plasma glycoprotein that binds a number of ligands such as heme, heparin, heparan sulfate, thrombospondin, plasminogen, and divalent metal ions. Binds heparin and heparin/glycosaminoglycans in a zinc-dependent manner. Binds heparan sulfate on the surface of liver, lung, kidney and heart endothelial cells. Binds to N-sulfated polysaccharide chains on the surface of liver endothelial cells. Inhibits rosette formation. Acts as an adapter protein and is implicated in regulating many processes such as immune complex and pathogen clearance, cell chemotaxis, cell adhesion, angiogenesis, coagulation and fibrinolysis. Mediates clearance of necrotic cells through enhancing the phagocytosis of necrotic cells in a heparan sulfate-dependent pathway. This process can be regulated by the presence of certain HRG ligands such as heparin and zinc ions. Binds to IgG subclasses of immunoglobins containing kappa and lambda light chains with different affinities regulating their clearance and inhibiting the formation of insoluble immune complexes. Tethers plasminogen to the cell surface. Binds T-cells and alters the cell morphology. Modulates angiogenesis by blocking the CD6-mediated antiangiongenic effect of thrombospondins, THBS1 and THBS2. Acts as a regulator of the vascular endothelial growth factor (VEGF) signaling pathway; inhibits endothelial cell motility by reducing VEGF-induced complex formation between PXN/paxillin and ILK/integrin-linked protein kinase and by promoting inhibition of VEGF-induced tyrosine phosphorylation of focal adhesion kinases and alpha-actinins in endothelial cells. Also plays a role in the regulation of tumor angiogenesis and tumor immune surveillance. Normalizes tumor vessels and promotes antitumor immunity by polarizing tumor-associated macrophages, leading to decreased tumor growth and metastasis. The protein is Histidine-rich glycoprotein (HRG) of Homo sapiens (Human).